The following is a 328-amino-acid chain: Ketol-acid reductoisomerase (NADP(+)) (328 aa).

In terms of domain architecture, KARI N-terminal Rossmann spans 1–179 (MRVLYERDGD…GGGAAGIIET (179 aa)). Residues 24–27 (YGSQ), arginine 47, and serine 51 contribute to the NADP(+) site. Histidine 106 is a catalytic residue. Residue glycine 132 participates in NADP(+) binding. Residues 180 to 325 (TFVDETETDL…ARLRSRMTCA (146 aa)) form the KARI C-terminal knotted domain. Aspartate 188, glutamate 192, glutamate 224, and glutamate 228 together coordinate Mg(2+). Residue serine 249 participates in substrate binding.

This sequence belongs to the ketol-acid reductoisomerase family. The cofactor is Mg(2+).

It carries out the reaction (2R)-2,3-dihydroxy-3-methylbutanoate + NADP(+) = (2S)-2-acetolactate + NADPH + H(+). The enzyme catalyses (2R,3R)-2,3-dihydroxy-3-methylpentanoate + NADP(+) = (S)-2-ethyl-2-hydroxy-3-oxobutanoate + NADPH + H(+). It functions in the pathway amino-acid biosynthesis; L-isoleucine biosynthesis; L-isoleucine from 2-oxobutanoate: step 2/4. It participates in amino-acid biosynthesis; L-valine biosynthesis; L-valine from pyruvate: step 2/4. Involved in the biosynthesis of branched-chain amino acids (BCAA). Catalyzes an alkyl-migration followed by a ketol-acid reduction of (S)-2-acetolactate (S2AL) to yield (R)-2,3-dihydroxy-isovalerate. In the isomerase reaction, S2AL is rearranged via a Mg-dependent methyl migration to produce 3-hydroxy-3-methyl-2-ketobutyrate (HMKB). In the reductase reaction, this 2-ketoacid undergoes a metal-dependent reduction by NADPH to yield (R)-2,3-dihydroxy-isovalerate. The sequence is that of Ketol-acid reductoisomerase (NADP(+)) from Tremblaya princeps.